We begin with the raw amino-acid sequence, 130 residues long: Small ribosomal subunit protein uS9 (130 aa).

This sequence belongs to the universal ribosomal protein uS9 family.

The protein is Small ribosomal subunit protein uS9 of Bordetella avium (strain 197N).